The primary structure comprises 234 residues: UPF0173 metal-dependent hydrolase R01310 (234 aa).

This sequence belongs to the UPF0173 family.

The protein is UPF0173 metal-dependent hydrolase R01310 of Rhizobium meliloti (strain 1021) (Ensifer meliloti).